A 504-amino-acid chain; its full sequence is Probable cytosol aminopeptidase (504 aa).

Residues Lys-263 and Asp-268 each coordinate Mn(2+). Lys-275 is an active-site residue. Positions 286, 345, and 347 each coordinate Mn(2+). Arg-349 is a catalytic residue.

This sequence belongs to the peptidase M17 family. Mn(2+) serves as cofactor.

Its subcellular location is the cytoplasm. It catalyses the reaction Release of an N-terminal amino acid, Xaa-|-Yaa-, in which Xaa is preferably Leu, but may be other amino acids including Pro although not Arg or Lys, and Yaa may be Pro. Amino acid amides and methyl esters are also readily hydrolyzed, but rates on arylamides are exceedingly low.. The enzyme catalyses Release of an N-terminal amino acid, preferentially leucine, but not glutamic or aspartic acids.. Functionally, presumably involved in the processing and regular turnover of intracellular proteins. Catalyzes the removal of unsubstituted N-terminal amino acids from various peptides. The sequence is that of Probable cytosol aminopeptidase from Sulfurihydrogenibium sp. (strain YO3AOP1).